The primary structure comprises 336 residues: uncharacterized protein (336 aa).

Residues 297 to 316 are compositionally biased toward basic and acidic residues; sequence KKDLQKSEEEEHPNDDHVYM. The disordered stretch occupies residues 297–336; sequence KKDLQKSEEEEHPNDDHVYMTEEDDMEKIERGIESLGNGH.

This is an uncharacterized protein from Invertebrate iridescent virus 6 (IIV-6).